A 476-amino-acid polypeptide reads, in one-letter code: Retinoic acid receptor gamma (476 aa).

The segment at Met-1–Pro-109 is modulating. The segment covering Ser-81–Ser-96 has biased composition (low complexity). The interval Ser-81 to Pro-102 is disordered. NR C4-type zinc fingers lie at residues Cys-110–Cys-130 and Cys-146–Cys-170. The segment at residues Cys-110–Met-175 is a DNA-binding region (nuclear receptor). Residues Ser-176–Pro-205 form a hinge region. Residues Arg-184–Lys-189 carry the Nuclear localization signal motif. The region spanning Glu-206–Pro-440 is the NR LBD domain. Residues Glu-435–Pro-476 form a disordered region. Positions Asn-462–Pro-476 are enriched in polar residues.

The protein belongs to the nuclear hormone receptor family. NR1 subfamily. Heterodimer; with a rxr molecule. Binds DNA preferentially as a rar/rxr heterodimer. As to expression, expressed in embryos, tadpoles and various adult tissue such as kidney, testis, brain, liver, skeletal muscle and spleen.

It is found in the nucleus. Functionally, receptor for retinoic acid. Retinoic acid receptors bind as heterodimers to their target response elements in response to their ligands, all-trans or 9-cis retinoic acid, and regulate gene expression in various biological processes. The rar/rxr heterodimers bind to the retinoic acid response elements (RARE) composed of tandem 5'-AGGTCA-3' sites known as DR1-DR5. The polypeptide is Retinoic acid receptor gamma (rarg) (Xenopus laevis (African clawed frog)).